Consider the following 367-residue polypeptide: Biotin synthase (367 aa).

Positions 67–291 (NAVQISTLLS…IAVTRICCPS (225 aa)) constitute a Radical SAM core domain. 3 residues coordinate [4Fe-4S] cluster: Cys82, Cys86, and Cys89. Residues Cys128, Cys159, Cys219, and Arg295 each coordinate [2Fe-2S] cluster.

It belongs to the radical SAM superfamily. Biotin synthase family. In terms of assembly, homodimer. The cofactor is [4Fe-4S] cluster. It depends on [2Fe-2S] cluster as a cofactor.

It carries out the reaction (4R,5S)-dethiobiotin + (sulfur carrier)-SH + 2 reduced [2Fe-2S]-[ferredoxin] + 2 S-adenosyl-L-methionine = (sulfur carrier)-H + biotin + 2 5'-deoxyadenosine + 2 L-methionine + 2 oxidized [2Fe-2S]-[ferredoxin]. It participates in cofactor biosynthesis; biotin biosynthesis; biotin from 7,8-diaminononanoate: step 2/2. Functionally, catalyzes the conversion of dethiobiotin (DTB) to biotin by the insertion of a sulfur atom into dethiobiotin via a radical-based mechanism. This is Biotin synthase from Psychrobacter sp. (strain PRwf-1).